The sequence spans 423 residues: Glycine amidinotransferase, mitochondrial (423 aa).

The N-terminal 43 residues, 1 to 43, are a transit peptide targeting the mitochondrion; the sequence is MLRVRCLRGGSRGAEAVHYIGSRLGRTLTGWVQRTFQSTQAAT. Phosphoserine is present on residues Ser-46 and Ser-49. Asp-170 serves as a coordination point for arginine. Active-site residues include Asp-254 and His-303. The arginine site is built by Asp-305, Arg-322, Ser-354, and Ser-355. An N6-acetyllysine modification is found at Lys-385. Residue Cys-407 is the Amidino-cysteine intermediate of the active site.

This sequence belongs to the amidinotransferase family. In terms of assembly, homodimer. There is an equilibrium between the monomeric and dimeric forms, shifted towards the side of the monomer. In terms of tissue distribution, expressed in brain, heart, kidney, liver, lung, salivary gland and skeletal muscle tissue, with the highest expression in kidney. Biallelically expressed in placenta and fetal tissues.

Its subcellular location is the mitochondrion inner membrane. It is found in the cytoplasm. It carries out the reaction L-arginine + glycine = guanidinoacetate + L-ornithine. It catalyses the reaction 4-aminobutanoate + L-arginine = 4-guanidinobutanoate + L-ornithine. The catalysed reaction is beta-alanine + L-arginine = 3-guanidinopropanoate + L-ornithine. The enzyme catalyses taurine + L-arginine = taurocyamine + L-ornithine. Its pathway is amine and polyamine biosynthesis; creatine biosynthesis; creatine from L-arginine and glycine: step 1/2. Transamidinase that catalyzes the transfer of the amidino group of L-arginine onto the amino moiety of acceptor metabolites such as glycine, beta-alanine, gamma-aminobutyric acid (GABA) and taurine yielding the corresponding guanidine derivatives. Catalyzes the rate-limiting step of creatine biosynthesis, namely the transfer of the amidino group from L-arginine to glycine to generate guanidinoacetate, which is then methylated by GAMT to form creatine. Provides creatine as a source for ATP generation in tissues with high energy demands, in particular skeletal muscle, heart and brain. The protein is Glycine amidinotransferase, mitochondrial (GATM) of Homo sapiens (Human).